The primary structure comprises 262 residues: tRNA U34 carboxymethyltransferase (262 aa).

Carboxy-S-adenosyl-L-methionine is bound by residues Lys-25, Trp-39, Lys-44, Gly-63, 114–115 (VE), Tyr-135, and Arg-250.

It belongs to the class I-like SAM-binding methyltransferase superfamily. CmoB family. Homotetramer.

The enzyme catalyses carboxy-S-adenosyl-L-methionine + 5-hydroxyuridine(34) in tRNA = 5-carboxymethoxyuridine(34) in tRNA + S-adenosyl-L-homocysteine + H(+). Its function is as follows. Catalyzes carboxymethyl transfer from carboxy-S-adenosyl-L-methionine (Cx-SAM) to 5-hydroxyuridine (ho5U) to form 5-carboxymethoxyuridine (cmo5U) at position 34 in tRNAs. The protein is tRNA U34 carboxymethyltransferase of Helicobacter acinonychis (strain Sheeba).